The sequence spans 340 residues: Ketol-acid reductoisomerase (NADP(+)) (340 aa).

The KARI N-terminal Rossmann domain occupies 1 to 182 (MRVYYDRDCD…GGGRSGIIET (182 aa)). NADP(+)-binding positions include 24 to 27 (YGSQ), arginine 48, serine 51, serine 53, and 83 to 86 (DELQ). Residue histidine 108 is part of the active site. Glycine 134 is an NADP(+) binding site. The KARI C-terminal knotted domain maps to 183–329 (NFREECETDL…ETLRGMMPWI (147 aa)). The Mg(2+) site is built by aspartate 191, glutamate 195, glutamate 227, and glutamate 231. Position 252 (serine 252) interacts with substrate.

This sequence belongs to the ketol-acid reductoisomerase family. It depends on Mg(2+) as a cofactor.

The enzyme catalyses (2R)-2,3-dihydroxy-3-methylbutanoate + NADP(+) = (2S)-2-acetolactate + NADPH + H(+). It catalyses the reaction (2R,3R)-2,3-dihydroxy-3-methylpentanoate + NADP(+) = (S)-2-ethyl-2-hydroxy-3-oxobutanoate + NADPH + H(+). Its pathway is amino-acid biosynthesis; L-isoleucine biosynthesis; L-isoleucine from 2-oxobutanoate: step 2/4. The protein operates within amino-acid biosynthesis; L-valine biosynthesis; L-valine from pyruvate: step 2/4. In terms of biological role, involved in the biosynthesis of branched-chain amino acids (BCAA). Catalyzes an alkyl-migration followed by a ketol-acid reduction of (S)-2-acetolactate (S2AL) to yield (R)-2,3-dihydroxy-isovalerate. In the isomerase reaction, S2AL is rearranged via a Mg-dependent methyl migration to produce 3-hydroxy-3-methyl-2-ketobutyrate (HMKB). In the reductase reaction, this 2-ketoacid undergoes a metal-dependent reduction by NADPH to yield (R)-2,3-dihydroxy-isovalerate. This chain is Ketol-acid reductoisomerase (NADP(+)), found in Roseobacter denitrificans (strain ATCC 33942 / OCh 114) (Erythrobacter sp. (strain OCh 114)).